Reading from the N-terminus, the 513-residue chain is Lysine--tRNA ligase (513 aa).

Mg(2+)-binding residues include E422 and E429.

This sequence belongs to the class-II aminoacyl-tRNA synthetase family. Homodimer. Mg(2+) serves as cofactor.

Its subcellular location is the cytoplasm. The enzyme catalyses tRNA(Lys) + L-lysine + ATP = L-lysyl-tRNA(Lys) + AMP + diphosphate. In Tolumonas auensis (strain DSM 9187 / NBRC 110442 / TA 4), this protein is Lysine--tRNA ligase.